Reading from the N-terminus, the 423-residue chain is Amino sugar nitrososynthase RubN8 (423 aa).

It belongs to the acyl-CoA dehydrogenase family. FAD is required as a cofactor.

The protein operates within antibiotic biosynthesis. Nitrososynthase involved in the biosynthesis of rubradirin, an ansamycin antibiotic. In vitro, catalyzes the double-oxidation of TDP-L-epi-vancosamine to TDP-L-epi-vancosonitrose. In vivo, probably catalyzes the formation of D-rubranitrose, the nitro sugar moiety of rubradirin. This Streptomyces rubradiris (Streptomyces achromogenes subsp. rubradiris) protein is Amino sugar nitrososynthase RubN8.